We begin with the raw amino-acid sequence, 649 residues long: uncharacterized protein (649 aa).

It is found in the nucleus. Its subcellular location is the cytoplasm. This is an uncharacterized protein from Schizosaccharomyces pombe (strain 972 / ATCC 24843) (Fission yeast).